The chain runs to 564 residues: Kelch repeat and BTB domain-containing protein 1 (564 aa).

The BTB domain occupies 21–88 (CDIDIVINDE…IYGIPLSLTN (68 aa)). One can recognise a BACK domain in the interval 123–219 (CIDFYIYADK…SLLSPQVIKS (97 aa)). Kelch repeat units follow at residues 252–297 (IELI…VLDN), 298–346 (IIYM…ADDE), 347–395 (YIYC…MLNG), 397–441 (IYVI…VHAG), 442–492 (KIYI…SVHN), and 494–539 (LYVG…CEPI).

In terms of assembly, interacts (via BTB domain) with host CUL3.

The protein resides in the host cytoplasm. Its function is as follows. Probable substrate-specific adapter of CUL3-containing E3 ubiquitin-protein ligases which mediate the ubiquitination and subsequent proteasomal degradation of host target proteins. The polypeptide is Kelch repeat and BTB domain-containing protein 1 (KBTB1) (Camelus).